We begin with the raw amino-acid sequence, 88 residues long: Serine protease inhibitor Kazal-type 11 (88 aa).

An N-terminal signal peptide occupies residues 1 to 24 (MSSTWIKFLFILTLVLLPYFVAES). The Kazal-like domain occupies 32–87 (LRKVPNCTLYKSESDCSRTLIPVCADNQMTYYNACYFCLEQLVSPIKYKYHGICTK). N-linked (GlcNAc...) asparagine glycosylation occurs at Asn37. Intrachain disulfides connect Cys38–Cys69, Cys47–Cys66, and Cys55–Cys85.

As to expression, expressed in epydiymis, in the caput. Also expressed in seminal vesicles.

Its subcellular location is the secreted. Its function is as follows. Probable serine protease inhibitor. This is Serine protease inhibitor Kazal-type 11 (Spink11) from Mus musculus (Mouse).